A 650-amino-acid chain; its full sequence is Acetyl-coenzyme A synthetase (650 aa).

CoA is bound by residues 191 to 194 (RGGR), Thr311, and Asn335. ATP is bound by residues 387–389 (GEP), 411–416 (DTWWQT), Asp500, and Arg515. Ser523 provides a ligand contact to CoA. Residue Arg526 coordinates ATP. The Mg(2+) site is built by Val537, His539, and Val542. Arg584 serves as a coordination point for CoA. Position 609 is an N6-acetyllysine (Lys609).

This sequence belongs to the ATP-dependent AMP-binding enzyme family. The cofactor is Mg(2+). Acetylated. Deacetylation by the SIR2-homolog deacetylase activates the enzyme.

It carries out the reaction acetate + ATP + CoA = acetyl-CoA + AMP + diphosphate. Functionally, catalyzes the conversion of acetate into acetyl-CoA (AcCoA), an essential intermediate at the junction of anabolic and catabolic pathways. AcsA undergoes a two-step reaction. In the first half reaction, AcsA combines acetate with ATP to form acetyl-adenylate (AcAMP) intermediate. In the second half reaction, it can then transfer the acetyl group from AcAMP to the sulfhydryl group of CoA, forming the product AcCoA. This Shewanella baltica (strain OS195) protein is Acetyl-coenzyme A synthetase.